The following is a 339-amino-acid chain: GTP 3',8-cyclase (339 aa).

A Radical SAM core domain is found at 13 to 249 (RYGRPLRDLR…GEVAQRHAFA (237 aa)). Arg22 provides a ligand contact to GTP. 2 residues coordinate [4Fe-4S] cluster: Cys29 and Cys33. Tyr35 lines the S-adenosyl-L-methionine pocket. Residue Cys36 participates in [4Fe-4S] cluster binding. GTP is bound at residue Arg75. Position 79 (Gly79) interacts with S-adenosyl-L-methionine. Thr106 contacts GTP. Ser130 contacts S-adenosyl-L-methionine. Lys168 is a binding site for GTP. Met202 is a binding site for S-adenosyl-L-methionine. Residues Cys266 and Cys269 each coordinate [4Fe-4S] cluster. Residue 271–273 (RAR) coordinates GTP. A [4Fe-4S] cluster-binding site is contributed by Cys283.

It belongs to the radical SAM superfamily. MoaA family. In terms of assembly, monomer and homodimer. [4Fe-4S] cluster serves as cofactor.

The catalysed reaction is GTP + AH2 + S-adenosyl-L-methionine = (8S)-3',8-cyclo-7,8-dihydroguanosine 5'-triphosphate + 5'-deoxyadenosine + L-methionine + A + H(+). It functions in the pathway cofactor biosynthesis; molybdopterin biosynthesis. Functionally, catalyzes the cyclization of GTP to (8S)-3',8-cyclo-7,8-dihydroguanosine 5'-triphosphate. The polypeptide is GTP 3',8-cyclase (Xanthomonas campestris pv. campestris (strain 8004)).